We begin with the raw amino-acid sequence, 149 residues long: Nucleoside deoxyribosyltransferase (149 aa).

Glu-90 serves as the catalytic Nucleophile.

This sequence belongs to the nucleoside deoxyribosyltransferase family.

It carries out the reaction 2-deoxy-D-ribosyl-base(1) + base(2) = 2-deoxy-D-ribosyl-base(2) + base(1).. It functions in the pathway nucleotide metabolism; nucleotide salvage pathway. Functionally, catalyzes the cleavage of the glycosidic bond of 2'-deoxyribonucleosides and the transfer of the deoxyribosyl moiety to an acceptor purine or pyrimidine base. The sequence is that of Nucleoside deoxyribosyltransferase (ntd) from Lactobacillus johnsonii (strain CNCM I-12250 / La1 / NCC 533).